We begin with the raw amino-acid sequence, 203 residues long: MYKPVSLFLFFLILAAAIHTNAVQSADEAISKAAVLIRQPWLNEVMTGITHLGASSFLLPLIVIIGAGMFFYRKTWDGLLMLLVFGTDRLLNKVLKEWIERVRPDFAPLVHESSFSFPSGHSMNAACVYPVIAYFLVKHLPFLSKHKKMVYIIAGVIAVLVGISRVYLGVHFVTDVLGGFSLGLLLFFLVKGFDEKIKRFRQK.

A topological domain (cytoplasmic) is located at residue methionine 1. A helical membrane pass occupies residues 2–17 (YKPVSLFLFFLILAAA). At 18–55 (IHTNAVQSADEAISKAAVLIRQPWLNEVMTGITHLGAS) the chain is on the extracellular side. A helical transmembrane segment spans residues 56 to 74 (SFLLPLIVIIGAGMFFYRK). Residues 75–78 (TWDG) are Cytoplasmic-facing. A helical membrane pass occupies residues 79–99 (LLMLLVFGTDRLLNKVLKEWI). The segment at 96–104 (KEWIERVRP) is phosphatase sequence motif I. Residues 100–119 (ERVRPDFAPLVHESSFSFPS) lie on the Extracellular side of the membrane. Positions 118–121 (PSGH) are phosphatase sequence motif II. Residues 120–139 (GHSMNAACVYPVIAYFLVKH) form a helical membrane-spanning segment. The active-site Proton donors is histidine 121. Over 140-146 (LPFLSKH) the chain is Cytoplasmic. A helical membrane pass occupies residues 147–167 (KKMVYIIAGVIAVLVGISRVY). The segment at 164 to 175 (SRVYLGVHFVTD) is phosphatase sequence motif III. Residues 168-172 (LGVHF) lie on the Extracellular side of the membrane. The active-site Nucleophile is histidine 171. Residues 173 to 196 (VTDVLGGFSLGLLLFFLVKGFDEK) traverse the membrane as a helical segment. Topologically, residues 197-203 (IKRFRQK) are cytoplasmic.

Belongs to the PA-phosphatase related phosphoesterase family.

The protein localises to the cell membrane. The catalysed reaction is a 1,2-diacyl-sn-glycero-3-phospho-(1'-sn-glycero-3'-phosphate) + H2O = a 1,2-diacyl-sn-glycero-3-phospho-(1'-sn-glycerol) + phosphate. Its function is as follows. Catalyzes the dephosphorylation of phosphatidylglycerophosphate (PGP) to phosphatidylglycerol. Also has undecaprenyl pyrophosphate phosphatase activity, required for the biosynthesis of the lipid carrier undecaprenyl phosphate. The polypeptide is Phosphatidylglycerophosphatase B (Bacillus subtilis (strain 168)).